Reading from the N-terminus, the 862-residue chain is Probable linoleate 9S-lipoxygenase 5 (862 aa).

A PLAT domain is found at 36–161; that stretch reads NDVNASLLDG…KYKSERIFFA (126 aa). A Lipoxygenase domain is found at 164-862; it reads AYLPGETPEP…GKGIPNSVSI (699 aa). Positions 523, 528, 714, 718, and 862 each coordinate Fe cation.

The protein belongs to the lipoxygenase family. Monomer. The cofactor is Fe cation. As to expression, not detected in leaves, stems, flowers, roots, tubers and stolons during normal growth and development.

Its subcellular location is the cytoplasm. The enzyme catalyses (9Z,12Z)-octadecadienoate + O2 = (9S)-hydroperoxy-(10E,12Z)-octadecadienoate. It participates in lipid metabolism; oxylipin biosynthesis. Its function is as follows. Plant lipoxygenases may be involved in a number of diverse aspects of plant physiology including growth and development, pest resistance, and senescence or responses to wounding. May contribute to cell death during the hypersensitive response (HR) by the massive production of free fatty acid hydroperoxides. Catalyzes the hydroperoxidation of lipids containing a cis,cis-1,4-pentadiene structure. The sequence is that of Probable linoleate 9S-lipoxygenase 5 (LOX1.5) from Solanum tuberosum (Potato).